Consider the following 481-residue polypeptide: NADH-quinone oxidoreductase subunit N (481 aa).

The next 14 membrane-spanning stretches (helical) occupy residues 11–31, 37–57, 74–94, 103–123, 128–148, 162–182, 205–225, 238–258, 272–292, 300–320, 328–348, 371–391, 405–425, and 457–477; these read AYPE…DLFA, YLAF…TCGI, AMSD…LIYS, LLKG…MVMV, LITL…MVAL, FFVL…MLYG, IFII…SAVP, PTAV…GFVM, WQGM…IAAI, MLAY…IAAG, MFYV…IMLV, LAFM…MIGF, GYIW…FYYL, and LAII…LSAI.

The protein belongs to the complex I subunit 2 family. NDH-1 is composed of 14 different subunits. Subunits NuoA, H, J, K, L, M, N constitute the membrane sector of the complex.

The protein localises to the cell inner membrane. It carries out the reaction a quinone + NADH + 5 H(+)(in) = a quinol + NAD(+) + 4 H(+)(out). Functionally, NDH-1 shuttles electrons from NADH, via FMN and iron-sulfur (Fe-S) centers, to quinones in the respiratory chain. The immediate electron acceptor for the enzyme in this species is believed to be ubiquinone. Couples the redox reaction to proton translocation (for every two electrons transferred, four hydrogen ions are translocated across the cytoplasmic membrane), and thus conserves the redox energy in a proton gradient. The sequence is that of NADH-quinone oxidoreductase subunit N from Nitrosomonas europaea (strain ATCC 19718 / CIP 103999 / KCTC 2705 / NBRC 14298).